The chain runs to 123 residues: Small ribosomal subunit protein uS12 (123 aa).

Residues 1–32 (MPTINQLIRKPREAQKARDKAPALQSSPQKRG) are disordered. Positions 10 to 21 (KPREAQKARDKA) are enriched in basic and acidic residues. Aspartate 89 bears the 3-methylthioaspartic acid mark.

It belongs to the universal ribosomal protein uS12 family. In terms of assembly, part of the 30S ribosomal subunit. Contacts proteins S8 and S17. May interact with IF1 in the 30S initiation complex.

Functionally, with S4 and S5 plays an important role in translational accuracy. Interacts with and stabilizes bases of the 16S rRNA that are involved in tRNA selection in the A site and with the mRNA backbone. Located at the interface of the 30S and 50S subunits, it traverses the body of the 30S subunit contacting proteins on the other side and probably holding the rRNA structure together. The combined cluster of proteins S8, S12 and S17 appears to hold together the shoulder and platform of the 30S subunit. This chain is Small ribosomal subunit protein uS12, found in Azorhizobium caulinodans (strain ATCC 43989 / DSM 5975 / JCM 20966 / LMG 6465 / NBRC 14845 / NCIMB 13405 / ORS 571).